We begin with the raw amino-acid sequence, 2287 residues long: Serine/threonine-protein kinase MEC1 (2287 aa).

In terms of domain architecture, FAT spans 1310–1864 (TLAKKSLETD…LWYISILLNS (555 aa)). A PI3K/PI4K catalytic domain is found at 1968–2271 (FSSQYMVFNS…QVEALTQESC (304 aa)). Residues 1974 to 1980 (VFNSLKK) form a G-loop region. The catalytic loop stretch occupies residues 2140–2148 (GLGDRHCEN). The segment at 2160 to 2184 (HVDFDCLFEKGKKLPVPEIVPFRLT) is activation loop. Residues 2255–2287 (LALSVSGQVEALTQESCSVENLSKMYIGWLPFW) form the FATC domain.

It belongs to the PI3/PI4-kinase family. ATM subfamily.

Its subcellular location is the nucleus. The enzyme catalyses L-seryl-[protein] + ATP = O-phospho-L-seryl-[protein] + ADP + H(+). It catalyses the reaction L-threonyl-[protein] + ATP = O-phospho-L-threonyl-[protein] + ADP + H(+). Functionally, serine/threonine protein kinase which activates checkpoint signaling upon genotoxic stresses such as ionizing radiation (IR), ultraviolet light (UV), or DNA replication stalling, thereby acting as a DNA damage sensor. Recognizes the substrate consensus sequence [ST]-Q. Recruited to DNA lesions in order to initiate the DNA repair by homologous recombination. Phosphorylates histone H2A to form H2AS128ph (gamma-H2A) at sites of DNA damage, also involved in the regulation of DNA damage response mechanism. Required for cell growth and meiotic recombination. The chain is Serine/threonine-protein kinase MEC1 (MEC1) from Kluyveromyces lactis (strain ATCC 8585 / CBS 2359 / DSM 70799 / NBRC 1267 / NRRL Y-1140 / WM37) (Yeast).